The following is a 92-amino-acid chain: Small ribosomal subunit protein uS19 (92 aa).

The protein belongs to the universal ribosomal protein uS19 family.

Functionally, protein S19 forms a complex with S13 that binds strongly to the 16S ribosomal RNA. The protein is Small ribosomal subunit protein uS19 of Vibrio vulnificus (strain CMCP6).